Reading from the N-terminus, the 170-residue chain is Glycine cleavage system H protein, mitochondrial (170 aa).

The transit peptide at 1–47 (MLRTTRLWTTRMPTVSKLFLRNSSGNALNKNKLPFLYSSQGPQAVRY) directs the protein to the mitochondrion. The Lipoyl-binding domain maps to 61 to 143 (TAFVGITKYA…MGDGWLVKMK (83 aa)). Position 102 is an N6-lipoyllysine (lysine 102).

It belongs to the GcvH family. As to quaternary structure, component of the glycine decarboxylase complex (GDC), which is composed of four proteins: P, T, L and H. Requires (R)-lipoate as cofactor.

The protein resides in the mitochondrion. The glycine cleavage system (glycine decarboxylase complex) catalyzes the degradation of glycine. The H protein shuttles the methylamine group of glycine from the P protein to the T protein. In Saccharomyces cerevisiae (strain ATCC 204508 / S288c) (Baker's yeast), this protein is Glycine cleavage system H protein, mitochondrial (GCV3).